The following is a 259-amino-acid chain: Thiazole synthase (259 aa).

The Schiff-base intermediate with DXP role is filled by K99. 1-deoxy-D-xylulose 5-phosphate-binding positions include G161, 187-188 (AG), and 209-210 (NT).

The protein belongs to the ThiG family. In terms of assembly, homotetramer. Forms heterodimers with either ThiH or ThiS.

It localises to the cytoplasm. The enzyme catalyses [ThiS sulfur-carrier protein]-C-terminal-Gly-aminoethanethioate + 2-iminoacetate + 1-deoxy-D-xylulose 5-phosphate = [ThiS sulfur-carrier protein]-C-terminal Gly-Gly + 2-[(2R,5Z)-2-carboxy-4-methylthiazol-5(2H)-ylidene]ethyl phosphate + 2 H2O + H(+). It functions in the pathway cofactor biosynthesis; thiamine diphosphate biosynthesis. In terms of biological role, catalyzes the rearrangement of 1-deoxy-D-xylulose 5-phosphate (DXP) to produce the thiazole phosphate moiety of thiamine. Sulfur is provided by the thiocarboxylate moiety of the carrier protein ThiS. In vitro, sulfur can be provided by H(2)S. In Nautilia profundicola (strain ATCC BAA-1463 / DSM 18972 / AmH), this protein is Thiazole synthase.